Consider the following 290-residue polypeptide: uncharacterized protein (290 aa).

Helical transmembrane passes span 10–27, 32–54, 69–91, 100–117, and 121–143; these read FFVARLLVVLYLSTLLLI, VNYIAVGILSVYFLINVYVYFFS, ILVPAFVFFSKILYSIYALGVLI, VLAGIILLETYGLAFFYF, and YLLMISHFILFLALFFTSYNFEY. A coiled-coil region spans residues 147 to 183; the sequence is VGKERKRILKLKKNYHKLLKEFSNFEREKRMFSNLRK.

The protein resides in the cell membrane. This is an uncharacterized protein from Aquifex aeolicus (strain VF5).